The sequence spans 137 residues: ATP synthase epsilon chain (137 aa).

Belongs to the ATPase epsilon chain family. In terms of assembly, F-type ATPases have 2 components, CF(1) - the catalytic core - and CF(0) - the membrane proton channel. CF(1) has five subunits: alpha(3), beta(3), gamma(1), delta(1), epsilon(1). CF(0) has three main subunits: a, b and c.

The protein resides in the cell membrane. In terms of biological role, produces ATP from ADP in the presence of a proton gradient across the membrane. The protein is ATP synthase epsilon chain of Mycoplasmopsis synoviae (strain 53) (Mycoplasma synoviae).